A 37-amino-acid chain; its full sequence is Glucagon-1 (37 aa).

The protein belongs to the glucagon family.

The protein localises to the secreted. Functionally, glucagon plays a key role in glucose metabolism and homeostasis. Regulates blood glucose by increasing gluconeogenesis and decreasing glycolysis. In Huso dauricus (Kaluga sturgeon), this protein is Glucagon-1.